Consider the following 200-residue polypeptide: Nascent polypeptide-associated complex subunit alpha (200 aa).

The segment covering 1-19 (MADPRVEELPEEEVKKTQV) has biased composition (basic and acidic residues). Disordered regions lie at residues 1-54 (MADP…NEKK) and 118-165 (AAQQ…EDKD). Over residues 20-34 (EDLDNSSDDESDIEA) the composition is skewed to acidic residues. The region spanning 49–114 (SRNEKKARKA…AKIEDLNASA (66 aa)) is the NAC-A/B domain. The span at 127-146 (AEHDHAGHTHEHEEAGKAKE) shows a compositional bias: basic and acidic residues. A compositionally biased stretch (acidic residues) spans 147 to 160 (EEEEDEGEEVDAEG). Residues 161 to 200 (IEDKDIELVMTQANVSRKKAIKALKENDNDIVNSIMALSI) form the UBA domain.

This sequence belongs to the NAC-alpha family. Part of the nascent polypeptide-associated complex (NAC), consisting of npc-1/egd2 and npc-2/egd1. NAC associates with ribosomes via npc-2/egd1.

It localises to the cytoplasm. It is found in the nucleus. Functionally, component of the nascent polypeptide-associated complex (NAC), a dynamic component of the ribosomal exit tunnel, protecting the emerging polypeptides from interaction with other cytoplasmic proteins to ensure appropriate nascent protein targeting. The NAC complex also promotes mitochondrial protein import by enhancing productive ribosome interactions with the outer mitochondrial membrane and blocks the inappropriate interaction of ribosomes translating non-secretory nascent polypeptides with translocation sites in the membrane of the endoplasmic reticulum. Npc-1/egd2 may also be involved in transcription regulation. This is Nascent polypeptide-associated complex subunit alpha (npc-1) from Neurospora crassa (strain ATCC 24698 / 74-OR23-1A / CBS 708.71 / DSM 1257 / FGSC 987).